The primary structure comprises 793 residues: Kinesin-like protein KIN-14C (793 aa).

Residues 1 to 43 (MASRNQNRPPRSPNAKKEGLGGISFDKRRKVETQGGTGRRQAF) form a disordered region. Residues 1–69 (MASRNQNRPP…IEECGKVDFT (69 aa)) are globular. A compositionally biased stretch (basic and acidic residues) spans 15–32 (AKKEGLGGISFDKRRKVE). A coiled-coil region spans residues 120-375 (KENLKVSLES…EQQLAIANER (256 aa)). A Kinesin motor domain is found at 431–772 (NIRVFCRVRP…LRFAARVNAC (342 aa)). 516–523 (GQTGSGKT) serves as a coordination point for ATP.

The protein belongs to the TRAFAC class myosin-kinesin ATPase superfamily. Kinesin family. KIN-14 subfamily.

It localises to the cytoplasm. It is found in the cytoskeleton. The protein localises to the spindle. The protein resides in the phragmoplast. Its subcellular location is the chromosome. It localises to the centromere. It is found in the kinetochore. Its function is as follows. Kinesin that supports microtubule movement in an ATP-dependent manner and has a minus-end directed polarity. Plays a crucial role in spindle morphogenesis in male meiosis. In mitosis, is required for normal microtubule accumulation at the spindle poles during prophase and may play a role in spindle assembly during prometaphase. The protein is Kinesin-like protein KIN-14C of Arabidopsis thaliana (Mouse-ear cress).